The primary structure comprises 246 residues: 3-deoxy-manno-octulosonate cytidylyltransferase (246 aa).

The protein belongs to the KdsB family.

It is found in the cytoplasm. The catalysed reaction is 3-deoxy-alpha-D-manno-oct-2-ulosonate + CTP = CMP-3-deoxy-beta-D-manno-octulosonate + diphosphate. Its pathway is nucleotide-sugar biosynthesis; CMP-3-deoxy-D-manno-octulosonate biosynthesis; CMP-3-deoxy-D-manno-octulosonate from 3-deoxy-D-manno-octulosonate and CTP: step 1/1. It participates in bacterial outer membrane biogenesis; lipopolysaccharide biosynthesis. In terms of biological role, activates KDO (a required 8-carbon sugar) for incorporation into bacterial lipopolysaccharide in Gram-negative bacteria. The chain is 3-deoxy-manno-octulosonate cytidylyltransferase from Rickettsia africae (strain ESF-5).